Consider the following 231-residue polypeptide: 2,3-bisphosphoglycerate-dependent phosphoglycerate mutase (231 aa).

Substrate contacts are provided by residues 10 to 17, 23 to 24, R62, 89 to 92, K100, 116 to 117, and 185 to 186; these read RHGQSEWN, TG, ERHY, RR, and GN. Catalysis depends on H11, which acts as the Tele-phosphohistidine intermediate. E89 acts as the Proton donor/acceptor in catalysis.

The protein belongs to the phosphoglycerate mutase family. BPG-dependent PGAM subfamily. As to quaternary structure, homodimer.

The catalysed reaction is (2R)-2-phosphoglycerate = (2R)-3-phosphoglycerate. It participates in carbohydrate degradation; glycolysis; pyruvate from D-glyceraldehyde 3-phosphate: step 3/5. Its function is as follows. Catalyzes the interconversion of 2-phosphoglycerate and 3-phosphoglycerate. The chain is 2,3-bisphosphoglycerate-dependent phosphoglycerate mutase from Buchnera aphidicola subsp. Acyrthosiphon pisum (strain APS) (Acyrthosiphon pisum symbiotic bacterium).